The sequence spans 299 residues: Ribosomal RNA small subunit methyltransferase H (299 aa).

S-adenosyl-L-methionine contacts are provided by residues 24 to 26 (GGH), Asp43, Phe68, Asp90, and Gln97.

This sequence belongs to the methyltransferase superfamily. RsmH family.

Its subcellular location is the cytoplasm. The catalysed reaction is cytidine(1402) in 16S rRNA + S-adenosyl-L-methionine = N(4)-methylcytidine(1402) in 16S rRNA + S-adenosyl-L-homocysteine + H(+). In terms of biological role, specifically methylates the N4 position of cytidine in position 1402 (C1402) of 16S rRNA. The protein is Ribosomal RNA small subunit methyltransferase H of Francisella tularensis subsp. tularensis (strain WY96-3418).